The primary structure comprises 270 residues: SPbeta prophage-derived DNA ligase-like protein LigB (270 aa).

Lys-25 serves as the catalytic N6-AMP-lysine intermediate.

This sequence belongs to the ATP-dependent DNA ligase family.

The protein is SPbeta prophage-derived DNA ligase-like protein LigB (ligB) of Bacillus subtilis (strain 168).